A 32-amino-acid chain; its full sequence is Kappa-theraphotoxin-Gr2b (32 aa).

Disulfide bonds link C2–C16, C9–C21, and C15–C25.

This sequence belongs to the neurotoxin 30 (phrixotoxin) family. As to expression, expressed by the venom gland.

The protein resides in the secreted. Functionally, binds the voltage-sensor domain of the potassium channel KvAP (from the archaeon Aeropyrum pernix) and affects channel gating. This Grammostola rosea (Chilean rose tarantula) protein is Kappa-theraphotoxin-Gr2b.